An 879-amino-acid polypeptide reads, in one-letter code: Alanine--tRNA ligase (879 aa).

Zn(2+) contacts are provided by His-566, His-570, Cys-668, and His-672.

Belongs to the class-II aminoacyl-tRNA synthetase family. The cofactor is Zn(2+).

It localises to the cytoplasm. The catalysed reaction is tRNA(Ala) + L-alanine + ATP = L-alanyl-tRNA(Ala) + AMP + diphosphate. Functionally, catalyzes the attachment of alanine to tRNA(Ala) in a two-step reaction: alanine is first activated by ATP to form Ala-AMP and then transferred to the acceptor end of tRNA(Ala). Also edits incorrectly charged Ser-tRNA(Ala) and Gly-tRNA(Ala) via its editing domain. The polypeptide is Alanine--tRNA ligase (Clostridium botulinum (strain Loch Maree / Type A3)).